The chain runs to 321 residues: Glycerol-3-phosphate dehydrogenase [NAD(P)+] (321 aa).

NADPH-binding residues include serine 14, phenylalanine 15, arginine 35, and lysine 109. Lysine 109 and glycine 137 together coordinate sn-glycerol 3-phosphate. Alanine 141 contributes to the NADPH binding site. Residues lysine 192, aspartate 252, serine 262, arginine 263, and asparagine 264 each coordinate sn-glycerol 3-phosphate. The active-site Proton acceptor is the lysine 192. Residue arginine 263 participates in NADPH binding. Positions 287 and 289 each coordinate NADPH.

This sequence belongs to the NAD-dependent glycerol-3-phosphate dehydrogenase family.

It is found in the cytoplasm. It carries out the reaction sn-glycerol 3-phosphate + NAD(+) = dihydroxyacetone phosphate + NADH + H(+). It catalyses the reaction sn-glycerol 3-phosphate + NADP(+) = dihydroxyacetone phosphate + NADPH + H(+). Its pathway is membrane lipid metabolism; glycerophospholipid metabolism. Catalyzes the reduction of the glycolytic intermediate dihydroxyacetone phosphate (DHAP) to sn-glycerol 3-phosphate (G3P), the key precursor for phospholipid synthesis. This chain is Glycerol-3-phosphate dehydrogenase [NAD(P)+], found in Rickettsia felis (strain ATCC VR-1525 / URRWXCal2) (Rickettsia azadi).